Here is a 62-residue protein sequence, read N- to C-terminus: Potassium channel toxin alpha-KTx 10.1 (62 aa).

An N-terminal signal peptide occupies residues 1 to 22 (MEGIAKITLILLFLFVTMHTFA). Residues 23–28 (NWNTEA) constitute a propeptide that is removed on maturation. 3 disulfide bridges follow: Cys-31–Cys-50, Cys-36–Cys-55, and Cys-40–Cys-57. Tyr-60 carries the post-translational modification Tyrosine amide.

The protein belongs to the short scorpion toxin superfamily. Potassium channel inhibitor family. Alpha-KTx 10 subfamily. As to expression, expressed by the venom gland.

It is found in the secreted. Functionally, blocks Shaker B (Sh) and voltage-gated potassium-channels Kv1.1/KCNA1, Kv1.2/KCNA2, Kv1.3/KCNA3. Also inhibits small conductance calcium-activated potassium channels (KCNN) and intermediate conductance calcium-activated potassium channel (KCa3.1/KCNN4). This chain is Potassium channel toxin alpha-KTx 10.1, found in Centruroides noxius (Mexican scorpion).